A 1033-amino-acid polypeptide reads, in one-letter code: Potassium-transporting ATPase alpha chain 2 (1033 aa).

Topologically, residues 1–96 (MRRKTLEIYS…NALSPPKQTP (96 aa)) are cytoplasmic. The chain crosses the membrane as a helical span at residues 97–117 (EIIKFLKQMIGGFSILLWVGA). At 118–140 (ILCWIAYGIQYASNQSGSLDNVY) the chain is on the lumenal side. The helical transmembrane segment at 141–161 (LGVVLALVVILTGIFAYYQEA) threads the bilayer. The Cytoplasmic segment spans residues 162-297 (KSTNIMSSFS…NEKTPIATEI (136 aa)). A helical membrane pass occupies residues 298-317 (EHFVHIVAGVAVSIGILFFI). Residues 318-329 (IAVSLKYRVLDS) lie on the Lumenal side of the membrane. The chain crosses the membrane as a helical span at residues 330–347 (IIFLIGIIVANVPEGLLA). Residues 348 to 781 (TVTVTLSLTA…EEGRLIFDNL (434 aa)) lie on the Cytoplasmic side of the membrane. Residue Asp-385 is the 4-aspartylphosphate intermediate of the active site. Residues Asp-726 and Asp-730 each contribute to the Mg(2+) site. Residues 782 to 801 (KKTIAYTLTKNIAELCPFLV) traverse the membrane as a helical segment. The Lumenal segment spans residues 802–811 (YIIVGLPLPI). A helical transmembrane segment spans residues 812 to 832 (GTITILFIDLGTDIIPSIALA). Over 833 to 852 (YEKVESDIMNRKPRHKKKDR) the chain is Cytoplasmic. The helical transmembrane segment at 853–875 (LVNHQLAIYSYLHIGLMQALGAF) threads the bilayer. The Lumenal segment spans residues 876 to 927 (LVYFTVYAQQGFWPTSLIQLRVKWEQDYVNDLEDSYGQQWTRYQRKYLEWTG). The chain crosses the membrane as a helical span at residues 928–947 (YTAFFVGIMVQQIADLIIRK). Residues 948-961 (TRRNSIFQQGLFRN) are Cytoplasmic-facing. The residue at position 952 (Ser-952) is a Phosphoserine; by PKA. The chain crosses the membrane as a helical span at residues 962–980 (KVIWVGITSQIIVALILSC). The Lumenal segment spans residues 981–995 (GLGSITALNFTMLRV). The chain crosses the membrane as a helical span at residues 996 to 1016 (QYWFVAVPHAILIWVYDEVRK). At 1017-1033 (LFLRLYPGSWWDKNMYY) the chain is on the cytoplasmic side.

Belongs to the cation transport ATPase (P-type) (TC 3.A.3) family. Type IIC subfamily. In terms of assembly, composed of two subunits: alpha (catalytic) and beta. In terms of tissue distribution, found in skin, kidney and distal colon.

It localises to the membrane. It catalyses the reaction K(+)(out) + ATP + H2O + H(+)(in) = K(+)(in) + ADP + phosphate + 2 H(+)(out). In terms of biological role, catalyzes the hydrolysis of ATP coupled with the exchange of H(+) and K(+) ions across the plasma membrane. Responsible for potassium absorption in various tissues. In Cavia porcellus (Guinea pig), this protein is Potassium-transporting ATPase alpha chain 2 (ATP12A).